The sequence spans 728 residues: Procollagen-lysine,2-oxoglutarate 5-dioxygenase 1 (728 aa).

An N-terminal signal peptide occupies residues 1-18; it reads MRSLLLLAPLAWLLLVQA. Residues Asn-198 and Asn-539 are each glycosylated (N-linked (GlcNAc...) asparagine). Positions 637–728 constitute a Fe2OG dioxygenase domain; sequence QFDLAFVVRY…RYIAVSFVDP (92 aa). Fe cation contacts are provided by His-657 and Asp-659. A glycan (N-linked (GlcNAc...) asparagine) is linked at Asn-687. His-709 contributes to the Fe cation binding site. The active site involves Arg-719.

In terms of assembly, homodimer. Identified in a complex with P3H3 and P3H4. The cofactor is Fe(2+). Requires L-ascorbate as cofactor. In terms of tissue distribution, highly expressed in the liver, heart, lung, skeletal muscle and kidney.

It is found in the rough endoplasmic reticulum membrane. The enzyme catalyses L-lysyl-[collagen] + 2-oxoglutarate + O2 = (5R)-5-hydroxy-L-lysyl-[collagen] + succinate + CO2. Part of a complex composed of PLOD1, P3H3 and P3H4 that catalyzes hydroxylation of lysine residues in collagen alpha chains and is required for normal assembly and cross-linkling of collagen fibrils. Forms hydroxylysine residues in -Xaa-Lys-Gly- sequences in collagens. These hydroxylysines serve as sites of attachment for carbohydrate units and are essential for the stability of the intermolecular collagen cross-links. The sequence is that of Procollagen-lysine,2-oxoglutarate 5-dioxygenase 1 (Plod1) from Mus musculus (Mouse).